The primary structure comprises 55 residues: Large ribosomal subunit protein bL33 (55 aa).

Belongs to the bacterial ribosomal protein bL33 family.

The polypeptide is Large ribosomal subunit protein bL33 (Xanthomonas axonopodis pv. citri (strain 306)).